The chain runs to 459 residues: Bifunctional protein GlmU (459 aa).

Positions M1 to R230 are pyrophosphorylase. Residues L9–G12, K23, Q73, and G78–T79 contribute to the UDP-N-acetyl-alpha-D-glucosamine site. D103 provides a ligand contact to Mg(2+). UDP-N-acetyl-alpha-D-glucosamine-binding residues include G140, E155, N170, and N228. N228 is a Mg(2+) binding site. The interval V231 to N251 is linker. The N-acetyltransferase stretch occupies residues G252 to S459. Positions 333 and 351 each coordinate UDP-N-acetyl-alpha-D-glucosamine. H363 (proton acceptor) is an active-site residue. The UDP-N-acetyl-alpha-D-glucosamine site is built by Y366 and N377. Residues N386–Y387, A423, and R440 contribute to the acetyl-CoA site.

It in the N-terminal section; belongs to the N-acetylglucosamine-1-phosphate uridyltransferase family. In the C-terminal section; belongs to the transferase hexapeptide repeat family. Homotrimer. The cofactor is Mg(2+).

The protein localises to the cytoplasm. The enzyme catalyses alpha-D-glucosamine 1-phosphate + acetyl-CoA = N-acetyl-alpha-D-glucosamine 1-phosphate + CoA + H(+). It catalyses the reaction N-acetyl-alpha-D-glucosamine 1-phosphate + UTP + H(+) = UDP-N-acetyl-alpha-D-glucosamine + diphosphate. The protein operates within nucleotide-sugar biosynthesis; UDP-N-acetyl-alpha-D-glucosamine biosynthesis; N-acetyl-alpha-D-glucosamine 1-phosphate from alpha-D-glucosamine 6-phosphate (route II): step 2/2. Its pathway is nucleotide-sugar biosynthesis; UDP-N-acetyl-alpha-D-glucosamine biosynthesis; UDP-N-acetyl-alpha-D-glucosamine from N-acetyl-alpha-D-glucosamine 1-phosphate: step 1/1. It participates in bacterial outer membrane biogenesis; LPS lipid A biosynthesis. In terms of biological role, catalyzes the last two sequential reactions in the de novo biosynthetic pathway for UDP-N-acetylglucosamine (UDP-GlcNAc). The C-terminal domain catalyzes the transfer of acetyl group from acetyl coenzyme A to glucosamine-1-phosphate (GlcN-1-P) to produce N-acetylglucosamine-1-phosphate (GlcNAc-1-P), which is converted into UDP-GlcNAc by the transfer of uridine 5-monophosphate (from uridine 5-triphosphate), a reaction catalyzed by the N-terminal domain. This Bacillus cytotoxicus (strain DSM 22905 / CIP 110041 / 391-98 / NVH 391-98) protein is Bifunctional protein GlmU.